The primary structure comprises 414 residues: Glutathione gamma-glutamylcysteinyltransferase (414 aa).

The 220-residue stretch at 37–256 (QLKKSFYKRQ…GYVLLEPMHI (220 aa)) folds into the Peptidase C83 domain.

Belongs to the phytochelatin synthase family.

The enzyme catalyses [Glu(-Cys)](n)-Gly + glutathione + H(+) = [Glu(-Cys)](n+1)-Gly + glycine. Its function is as follows. Required for detoxification of heavy metals such as cadmium and arsenate. The sequence is that of Glutathione gamma-glutamylcysteinyltransferase from Schizosaccharomyces pombe (strain 972 / ATCC 24843) (Fission yeast).